A 280-amino-acid chain; its full sequence is Nitrogenase iron protein (280 aa).

9–16 (GKGGIGKS) serves as a coordination point for ATP. C97 contributes to the [4Fe-4S] cluster binding site. R100 is subject to ADP-ribosylarginine; by dinitrogenase reductase ADP-ribosyltransferase. C132 contacts [4Fe-4S] cluster.

The protein belongs to the NifH/BchL/ChlL family. As to quaternary structure, homodimer. Requires [4Fe-4S] cluster as cofactor. In terms of processing, the reversible ADP-ribosylation of Arg-100 inactivates the nitrogenase reductase and regulates nitrogenase activity.

The enzyme catalyses N2 + 8 reduced [2Fe-2S]-[ferredoxin] + 16 ATP + 16 H2O = H2 + 8 oxidized [2Fe-2S]-[ferredoxin] + 2 NH4(+) + 16 ADP + 16 phosphate + 6 H(+). Functionally, the key enzymatic reactions in nitrogen fixation are catalyzed by the nitrogenase complex, which has 2 components: the iron protein and the molybdenum-iron protein. This is Nitrogenase iron protein from Desulforudis audaxviator (strain MP104C).